Here is a 507-residue protein sequence, read N- to C-terminus: AMSH-like ubiquitin thioesterase 1 (507 aa).

The MPN domain occupies 333-463 (LHIATSMMDT…IFRLTTPGGM (131 aa)). Residues H411, H413, D424, H426, C469, H475, and H477 each contribute to the Zn(2+) site. The JAMM motif signature appears at 411–424 (HTHPTQSCFMSSID).

This sequence belongs to the peptidase M67C family. Zn(2+) is required as a cofactor.

It is found in the membrane. The protein resides in the cytoplasm. Its function is as follows. Zinc metalloprotease that cleaves 'Lys-48'- and 'Lys-63'-linked polyubiquitin chains. The polypeptide is AMSH-like ubiquitin thioesterase 1 (AMSH1) (Arabidopsis thaliana (Mouse-ear cress)).